The primary structure comprises 750 residues: MIIRSPEPEVKILVDRDPVKTSFEEWAKPGHFSRTIAKGPDTTTWIWNLHADAHDFDSHTSDLEEISRKVFSAHFGQLSIIFLWLSGMYFHGARFSNYEAWLSDPTHIGPSAQVVWPIVGQEILNGDVGGGFRGIQITSGFFQIWRASGITNELQLYCTAIGALIFAALMLFAGWFHYHKAAPKLAWFQDVESMLNHHLAGLLGLGSLSWAGHQVHVSLPINQFLNAGVDPKEIPLPHEFILNRDLLAQLYPSFAEGATPFFTLNWSKYAEFLTFRGGLDPVTGGLWLTDIAHHHLAIAILFLIAGHMYRTNWGIGHGLKDILEAHKGPFTGQGHKGLYEILTTSWHAQLSLNLAMLGSLTIVVAHHMYSMPPYPYLATDYGTQLSLFTHHMWIGGFLIVGAAAHAAIFMVRDYDPTTRYNDLLDRVLRHRDAIISHLNWACIFLGFHSFGLYIHNDTMSALGRPQDMFSDTAIQLQPVFAQWIQNTHALAPGATAPGATASTSLTWGGGDLVAVGGKVALLPIPLGTADFLVHHIHAFTIHVTVLILLKGVLFARSSRLIPDKANLGFRFPCDGPGRGGTCQVSAWDHVFLGLFWMYNAISVVIFHFSWKMQSDVWGSISDQGVVTHITGGNFAQSSITINGWLRDFLWAQASQVIQSYGSSLSAYGLFFLGAHFVWAFSLMFLFSGRGYWQELIESIVWAHNKLKVAPATQPRALSIVQGRAVGVTHYLLGGIATTWAFFLARIIAVG.

A run of 8 helical transmembrane segments spans residues 70–93 (VFSA…FHGA), 156–179 (LYCT…FHYH), 195–219 (LNHH…HVSL), 291–309 (IAHH…GHMY), 346–369 (WHAQ…HHMY), 385–411 (LSLF…IFMV), 433–455 (AIIS…LYIH), and 531–549 (FLVH…LILL). [4Fe-4S] cluster-binding residues include Cys-573 and Cys-582. Transmembrane regions (helical) follow at residues 589 to 610 (HVFL…HFSW) and 664 to 686 (LSAY…MFLF). His-675 is a binding site for chlorophyll a'. Chlorophyll a is bound by residues Met-683 and Tyr-691. Phylloquinone is bound at residue Trp-692. Residues 724 to 744 (AVGVTHYLLGGIATTWAFFLA) form a helical membrane-spanning segment.

This sequence belongs to the PsaA/PsaB family. The PsaA/B heterodimer binds the P700 chlorophyll special pair and subsequent electron acceptors. PSI consists of a core antenna complex that captures photons, and an electron transfer chain that converts photonic excitation into a charge separation. The eukaryotic PSI reaction center is composed of at least 11 subunits. It depends on P700 is a chlorophyll a/chlorophyll a' dimer, A0 is one or more chlorophyll a, A1 is one or both phylloquinones and FX is a shared 4Fe-4S iron-sulfur center. as a cofactor.

Its subcellular location is the plastid. It is found in the chloroplast thylakoid membrane. The catalysed reaction is reduced [plastocyanin] + hnu + oxidized [2Fe-2S]-[ferredoxin] = oxidized [plastocyanin] + reduced [2Fe-2S]-[ferredoxin]. Functionally, psaA and PsaB bind P700, the primary electron donor of photosystem I (PSI), as well as the electron acceptors A0, A1 and FX. PSI is a plastocyanin-ferredoxin oxidoreductase, converting photonic excitation into a charge separation, which transfers an electron from the donor P700 chlorophyll pair to the spectroscopically characterized acceptors A0, A1, FX, FA and FB in turn. Oxidized P700 is reduced on the lumenal side of the thylakoid membrane by plastocyanin. This is Photosystem I P700 chlorophyll a apoprotein A1 from Coffea arabica (Arabian coffee).